The chain runs to 182 residues: ATP synthase subunit delta (182 aa).

The protein belongs to the ATPase delta chain family. F-type ATPases have 2 components, F(1) - the catalytic core - and F(0) - the membrane proton channel. F(1) has five subunits: alpha(3), beta(3), gamma(1), delta(1), epsilon(1). CF(0) has four main subunits: a(1), b(1), b'(1) and c(10-14). The alpha and beta chains form an alternating ring which encloses part of the gamma chain. F(1) is attached to F(0) by a central stalk formed by the gamma and epsilon chains, while a peripheral stalk is formed by the delta, b and b' chains.

The protein resides in the cellular thylakoid membrane. In terms of biological role, f(1)F(0) ATP synthase produces ATP from ADP in the presence of a proton or sodium gradient. F-type ATPases consist of two structural domains, F(1) containing the extramembraneous catalytic core and F(0) containing the membrane proton channel, linked together by a central stalk and a peripheral stalk. During catalysis, ATP synthesis in the catalytic domain of F(1) is coupled via a rotary mechanism of the central stalk subunits to proton translocation. This protein is part of the stalk that links CF(0) to CF(1). It either transmits conformational changes from CF(0) to CF(1) or is implicated in proton conduction. The sequence is that of ATP synthase subunit delta from Synechococcus sp. (strain JA-3-3Ab) (Cyanobacteria bacterium Yellowstone A-Prime).